A 178-amino-acid polypeptide reads, in one-letter code: dCTP deaminase, dUMP-forming (178 aa).

Residues 96–101 (RSSLGR), Asp113, 121–123 (TLE), Gln142, Tyr156, and Gln163 contribute to the dCTP site. The active-site Proton donor/acceptor is the Glu123.

The protein belongs to the dCTP deaminase family. In terms of assembly, homotrimer.

The catalysed reaction is dCTP + 2 H2O = dUMP + NH4(+) + diphosphate. It participates in pyrimidine metabolism; dUMP biosynthesis; dUMP from dCTP: step 1/1. In terms of biological role, bifunctional enzyme that catalyzes both the deamination of dCTP to dUTP and the hydrolysis of dUTP to dUMP without releasing the toxic dUTP intermediate. This Acetivibrio thermocellus (strain ATCC 27405 / DSM 1237 / JCM 9322 / NBRC 103400 / NCIMB 10682 / NRRL B-4536 / VPI 7372) (Clostridium thermocellum) protein is dCTP deaminase, dUMP-forming.